Reading from the N-terminus, the 293-residue chain is ATP phosphoribosyltransferase (293 aa).

The protein belongs to the ATP phosphoribosyltransferase family. Long subfamily. Requires Mg(2+) as cofactor.

The protein localises to the cytoplasm. It catalyses the reaction 1-(5-phospho-beta-D-ribosyl)-ATP + diphosphate = 5-phospho-alpha-D-ribose 1-diphosphate + ATP. Its pathway is amino-acid biosynthesis; L-histidine biosynthesis; L-histidine from 5-phospho-alpha-D-ribose 1-diphosphate: step 1/9. Feedback inhibited by histidine. Functionally, catalyzes the condensation of ATP and 5-phosphoribose 1-diphosphate to form N'-(5'-phosphoribosyl)-ATP (PR-ATP). Has a crucial role in the pathway because the rate of histidine biosynthesis seems to be controlled primarily by regulation of HisG enzymatic activity. The sequence is that of ATP phosphoribosyltransferase from Nitratidesulfovibrio vulgaris (strain DP4) (Desulfovibrio vulgaris).